The primary structure comprises 339 residues: Ribonucleoside-diphosphate reductase subunit beta (339 aa).

The Fe cation site is built by D87 and H121. Residue Y125 is part of the active site. A Fe cation-binding site is contributed by H215.

Belongs to the ribonucleoside diphosphate reductase small chain family. As to quaternary structure, tetramer of two alpha and two beta subunits. The cofactor is Fe cation.

The catalysed reaction is a 2'-deoxyribonucleoside 5'-diphosphate + [thioredoxin]-disulfide + H2O = a ribonucleoside 5'-diphosphate + [thioredoxin]-dithiol. Provides the precursors necessary for DNA synthesis. Catalyzes the biosynthesis of deoxyribonucleotides from the corresponding ribonucleotides. The protein is Ribonucleoside-diphosphate reductase subunit beta (nrdF) of Mycoplasmoides gallisepticum (strain R(low / passage 15 / clone 2)) (Mycoplasma gallisepticum).